A 286-amino-acid chain; its full sequence is 4-hydroxybenzoate octaprenyltransferase (286 aa).

7 helical membrane passes run 20 to 40 (IGTLLLMWPCLMALVLAAGGM), 43 to 63 (LKVLVIFIIGVVVMRACGCII), 96 to 116 (LFVVMGLIAFGLVLMLNPLVV), 142 to 162 (FLGVVWSWSIPMAYAAQTGTV), 167 to 187 (WWLFAANWCWTVAYDTMYAMV), 210 to 230 (QVIALFQLAALACFIIAGWAA), and 234 to 254 (LVYALGIITFVGFSLYQQKLI).

The protein belongs to the UbiA prenyltransferase family. Mg(2+) serves as cofactor.

The protein localises to the cell inner membrane. The enzyme catalyses all-trans-octaprenyl diphosphate + 4-hydroxybenzoate = 4-hydroxy-3-(all-trans-octaprenyl)benzoate + diphosphate. Its pathway is cofactor biosynthesis; ubiquinone biosynthesis. Its function is as follows. Catalyzes the prenylation of para-hydroxybenzoate (PHB) with an all-trans polyprenyl group. Mediates the second step in the final reaction sequence of ubiquinone-8 (UQ-8) biosynthesis, which is the condensation of the polyisoprenoid side chain with PHB, generating the first membrane-bound Q intermediate 3-octaprenyl-4-hydroxybenzoate. In Shewanella woodyi (strain ATCC 51908 / MS32), this protein is 4-hydroxybenzoate octaprenyltransferase.